Consider the following 545-residue polypeptide: Cannabidiolic acid synthase-like 2 (545 aa).

A signal peptide spans 1–28; the sequence is MKCSTFCFWYVCKIIFFFLSFNIQISIA. Cysteines 37 and 99 form a disulfide. N-linked (GlcNAc...) asparagine glycosylation is found at Asn-45, Asn-65, Asn-89, and Asn-168. Residues 77 to 251 form the FAD-binding PCMH-type domain; it reads TTPKPLVITT…AAWKIRLVAV (175 aa). Residues 114-176 constitute a cross-link (6-(S-cysteinyl)-8alpha-(pros-histidyl)-FAD (His-Cys)); it reads HDAEGMSYIS…ENLSFPAGYC (63 aa). Position 292 (His-292) interacts with substrate. Residues Asn-297, Asn-305, Asn-329, and Asn-361 are each glycosylated (N-linked (GlcNAc...) asparagine). Tyr-417 provides a ligand contact to substrate. Asn-467 is a glycosylation site (N-linked (GlcNAc...) asparagine). Tyr-484 acts as the Proton acceptor in catalysis. Asn-499 carries an N-linked (GlcNAc...) asparagine glycan.

It belongs to the oxygen-dependent FAD-linked oxidoreductase family. The cofactor is FAD. The FAD cofactor is bound via a bicovalent 6-S-cysteinyl, 8alpha-N1-histidyl FAD linkage.

It localises to the secreted. Has no cannabidiolic acid synthase activity. The polypeptide is Cannabidiolic acid synthase-like 2 (CBDAS3) (Cannabis sativa (Hemp)).